The sequence spans 176 residues: Flavodoxin (176 aa).

The 169-residue stretch at 4–172 folds into the Flavodoxin-like domain; the sequence is IGIFFGTDTG…RLASWLEEIK (169 aa).

The protein belongs to the flavodoxin family. FMN is required as a cofactor.

Its function is as follows. Low-potential electron donor to a number of redox enzymes. NifF is the electron donor to nitrogenase. The protein is Flavodoxin (nifF) of Klebsiella pneumoniae.